Here is a 34-residue protein sequence, read N- to C-terminus: Photosystem II reaction center protein M (34 aa).

The chain crosses the membrane as a helical span at residues Ile-5–Ile-25.

It belongs to the PsbM family. As to quaternary structure, PSII is composed of 1 copy each of membrane proteins PsbA, PsbB, PsbC, PsbD, PsbE, PsbF, PsbH, PsbI, PsbJ, PsbK, PsbL, PsbM, PsbT, PsbX, PsbY, PsbZ, Psb30/Ycf12, at least 3 peripheral proteins of the oxygen-evolving complex and a large number of cofactors. It forms dimeric complexes.

Its subcellular location is the plastid. It is found in the chloroplast thylakoid membrane. Functionally, one of the components of the core complex of photosystem II (PSII). PSII is a light-driven water:plastoquinone oxidoreductase that uses light energy to abstract electrons from H(2)O, generating O(2) and a proton gradient subsequently used for ATP formation. It consists of a core antenna complex that captures photons, and an electron transfer chain that converts photonic excitation into a charge separation. This subunit is found at the monomer-monomer interface. The sequence is that of Photosystem II reaction center protein M from Lolium perenne (Perennial ryegrass).